The sequence spans 376 residues: Beta-centractin (376 aa).

N-acetylmethionine is present on methionine 1. Tyrosine 4 carries the 3'-nitrotyrosine modification.

Belongs to the actin family. ARP1 subfamily.

The protein localises to the cytoplasm. Its subcellular location is the cytoskeleton. The protein resides in the microtubule organizing center. It is found in the centrosome. Functionally, component of a multi-subunit complex involved in microtubule based vesicle motility. It is associated with the centrosome. The chain is Beta-centractin (ACTR1B) from Bos taurus (Bovine).